A 968-amino-acid polypeptide reads, in one-letter code: Serine/threonine-protein kinase apg-1 (968 aa).

The region spanning Phe24 to Val329 is the Protein kinase domain. Residues Ile30–Val38 and Lys53 each bind ATP. Asp167 functions as the Proton acceptor in the catalytic mechanism. 4 disordered regions span residues Pro334–Ala500, Met528–Ser585, Leu884–Glu906, and Ala939–Ala968. 3 stretches are compositionally biased toward basic and acidic residues: residues Leu350–Asp361, Leu371–Gly380, and Pro417–Ala431. Composition is skewed to polar residues over residues Val441–Ser452, Met528–Ser538, and Ala545–Ala557.

It belongs to the protein kinase superfamily. Ser/Thr protein kinase family. APG1/unc-51/ULK1 subfamily. As to quaternary structure, homodimer. Forms a ternary complex with ATG13 and ATG17.

It is found in the cytoplasm. The protein resides in the preautophagosomal structure membrane. It catalyses the reaction L-seryl-[protein] + ATP = O-phospho-L-seryl-[protein] + ADP + H(+). It carries out the reaction L-threonyl-[protein] + ATP = O-phospho-L-threonyl-[protein] + ADP + H(+). Functionally, serine/threonine protein kinase involved in the cytoplasm to vacuole transport (Cvt) and found to be essential in autophagy, where it is required for the formation of autophagosomes. Involved in the clearance of protein aggregates which cannot be efficiently cleared by the proteasome. Required for selective autophagic degradation of the nucleus (nucleophagy) as well as for mitophagy which contributes to regulate mitochondrial quantity and quality by eliminating the mitochondria to a basal level to fulfill cellular energy requirements and preventing excess ROS production. Also involved in endoplasmic reticulum-specific autophagic process, in selective removal of ER-associated degradation (ERAD) substrates. Plays a key role in ATG9 and ATG23 cycling through the pre-autophagosomal structure and is necessary to promote ATG18 binding to ATG9 through phosphorylation of ATG9. Catalyzes phosphorylation of ATG4, decreasing the interaction between ATG4 and ATG8 and impairing deconjugation of PE-conjugated forms of ATG8. This Neurospora crassa (strain ATCC 24698 / 74-OR23-1A / CBS 708.71 / DSM 1257 / FGSC 987) protein is Serine/threonine-protein kinase apg-1.